Consider the following 178-residue polypeptide: Cytidylate kinase (178 aa).

Residue 7–15 participates in ATP binding; that stretch reads GLPGTGTTT.

The protein belongs to the cytidylate kinase family. Type 2 subfamily.

The protein localises to the cytoplasm. It catalyses the reaction CMP + ATP = CDP + ADP. The enzyme catalyses dCMP + ATP = dCDP + ADP. This chain is Cytidylate kinase, found in Methanococcus maripaludis (strain DSM 14266 / JCM 13030 / NBRC 101832 / S2 / LL).